The chain runs to 208 residues: Protein GrpE (208 aa).

The span at 1 to 12 shows a compositional bias: basic and acidic residues; sequence MTNKDESVEKNT. The tract at residues 1 to 51 is disordered; it reads MTNKDESVEKNTESTVEETNVKQNIDDSVEQAEESKGHLQDEAIEETSDEN. Polar residues predominate over residues 13–23; that stretch reads ESTVEETNVKQ. The span at 42-51 shows a compositional bias: acidic residues; the sequence is EAIEETSDEN.

Belongs to the GrpE family. Homodimer.

It is found in the cytoplasm. Functionally, participates actively in the response to hyperosmotic and heat shock by preventing the aggregation of stress-denatured proteins, in association with DnaK and GrpE. It is the nucleotide exchange factor for DnaK and may function as a thermosensor. Unfolded proteins bind initially to DnaJ; upon interaction with the DnaJ-bound protein, DnaK hydrolyzes its bound ATP, resulting in the formation of a stable complex. GrpE releases ADP from DnaK; ATP binding to DnaK triggers the release of the substrate protein, thus completing the reaction cycle. Several rounds of ATP-dependent interactions between DnaJ, DnaK and GrpE are required for fully efficient folding. In Staphylococcus aureus (strain USA300), this protein is Protein GrpE.